Here is a 640-residue protein sequence, read N- to C-terminus: Rab proteins geranylgeranyltransferase component A (640 aa).

Disordered stretches follow at residues 414 to 439 (DILGDNNNNNNNNNNNNNNNNNNNNN) and 594 to 640 (HNEN…EMEL). Residues 419–439 (NNNNNNNNNNNNNNNNNNNNN) are compositionally biased toward low complexity. Residues 604–624 (IDSDEDEDEDINDMNDNEEED) are compositionally biased toward acidic residues.

This sequence belongs to the Rab GDI family.

Substrate-binding subunit (component A) of the Rab geranylgeranyltransferase (GGTase) complex. Binds unprenylated Rab proteins and presents the substrate peptide to the catalytic component B. The component A is thought to be regenerated by transferring its prenylated Rab back to the donor membrane. This Candida albicans (Yeast) protein is Rab proteins geranylgeranyltransferase component A (MRS6).